We begin with the raw amino-acid sequence, 161 residues long: Peptidyl-prolyl cis-trans isomerase-like 3 (161 aa).

Serine 2 is modified (N-acetylserine). The 153-residue stretch at serine 2–isoleucine 154 folds into the PPIase cyclophilin-type domain. An Omega-N-methylarginine modification is found at arginine 61.

It belongs to the cyclophilin-type PPIase family. PPIL3 subfamily. Identified in the spliceosome C complex.

It carries out the reaction [protein]-peptidylproline (omega=180) = [protein]-peptidylproline (omega=0). PPIases accelerate the folding of proteins. It catalyzes the cis-trans isomerization of proline imidic peptide bonds in oligopeptides. May be involved in pre-mRNA splicing. This is Peptidyl-prolyl cis-trans isomerase-like 3 (Ppil3) from Mus musculus (Mouse).